We begin with the raw amino-acid sequence, 955 residues long: Protein translocase subunit SecA (955 aa).

ATP contacts are provided by residues Gln-87, 105–109 (GEGKT), and Asp-494. The disordered stretch occupies residues 861–955 (AAPAPAAPRP…KKAPRTKRKR (95 aa)). Residues 874–888 (QEAAQQAQGTAAPSA) show a composition bias toward low complexity. Residues 943 to 955 (SKGKKAPRTKRKR) show a composition bias toward basic residues.

Belongs to the SecA family. As to quaternary structure, monomer and homodimer. Part of the essential Sec protein translocation apparatus which comprises SecA, SecYEG and auxiliary proteins SecDF. Other proteins may also be involved.

It is found in the cell membrane. The protein localises to the cytoplasm. It catalyses the reaction ATP + H2O + cellular proteinSide 1 = ADP + phosphate + cellular proteinSide 2.. Part of the Sec protein translocase complex. Interacts with the SecYEG preprotein conducting channel. Has a central role in coupling the hydrolysis of ATP to the transfer of proteins into and across the cell membrane, serving as an ATP-driven molecular motor driving the stepwise translocation of polypeptide chains across the membrane. The protein is Protein translocase subunit SecA of Rhodococcus opacus (strain B4).